Reading from the N-terminus, the 165-residue chain is Fibrinogen-binding protein (165 aa).

Positions 1–29 are cleaved as a signal peptide; that stretch reads MKNKLIAKSLLTLAAIGITTTTIASTADA.

As to quaternary structure, interacts with host fibrinogen alpha chain/FGA. Interacts with host complement protein C3.

The protein localises to the secreted. Its function is as follows. Extracellular fibrinogen-binding protein that plays an important role in virulence. By interacting with the alpha chain of fibrinogen and its derivative fibrin, enhances a non-functional interaction between fibrinogen and platelets and is responsible for repression of fibrinogen-dependent platelet aggregation. In addition, assembles a fibrinogen protective shield around the bacteria which results in impaired phagocytic clearance by the host. Mechanistically, interacts with host complement C3b deposited on the surface of the bacterium via its C-terminal and then recruits fibrinogen via its N-terminal. In Staphylococcus aureus (strain Newman), this protein is Fibrinogen-binding protein (fib).